A 930-amino-acid polypeptide reads, in one-letter code: Translation initiation factor IF-2 (930 aa).

Residues 50-67 show a composition bias toward low complexity; the sequence is FKPAAAPKVEAKPAAPKV. Disordered regions lie at residues 50–217 and 260–346; these read FKPA…SSEE and EVVP…HELP. 2 stretches are compositionally biased toward basic and acidic residues: residues 68–90 and 110–125; these read SAEKKAEKSEPAKPAVAKEEAKP and FKAEREARAKEQAERR. The span at 129-141 shows a compositional bias: low complexity; the sequence is KGNNRDQQQNGNR. Basic and acidic residues-rich tracts occupy residues 157-167 and 262-295; these read RDNRRFNDQAK and VPEKKEPAVDTRRKKQARPDKNRDDYDHEEDGPR. Residues 309–318 show a composition bias toward low complexity; the sequence is NQKNSNWNNN. Residues 337-346 are compositionally biased toward basic and acidic residues; sequence VTERKFHELP. The tr-type G domain occupies 432–599; that stretch reads ERPPVVTIMG…TVLLVAEIQE (168 aa). Residues 441–448 form a G1 region; sequence GHVDHGKT. A GTP-binding site is contributed by 441–448; sequence GHVDHGKT. Positions 466–470 are G2; it reads GITQH. A G3 region spans residues 487-490; it reads DTPG. GTP-binding positions include 487-491 and 541-544; these read DTPGH and NKID. Positions 541-544 are G4; the sequence is NKID. The G5 stretch occupies residues 577–579; that stretch reads SAK.

Belongs to the TRAFAC class translation factor GTPase superfamily. Classic translation factor GTPase family. IF-2 subfamily.

The protein resides in the cytoplasm. One of the essential components for the initiation of protein synthesis. Protects formylmethionyl-tRNA from spontaneous hydrolysis and promotes its binding to the 30S ribosomal subunits. Also involved in the hydrolysis of GTP during the formation of the 70S ribosomal complex. This is Translation initiation factor IF-2 from Streptococcus pneumoniae (strain Taiwan19F-14).